A 301-amino-acid chain; its full sequence is tRNA-cytidine(32) 2-sulfurtransferase (301 aa).

The PP-loop motif motif lies at Ser55–Ser60. 3 residues coordinate [4Fe-4S] cluster: Cys130, Cys133, and Cys221.

It belongs to the TtcA family. Homodimer. Mg(2+) is required as a cofactor. Requires [4Fe-4S] cluster as cofactor.

Its subcellular location is the cytoplasm. The catalysed reaction is cytidine(32) in tRNA + S-sulfanyl-L-cysteinyl-[cysteine desulfurase] + AH2 + ATP = 2-thiocytidine(32) in tRNA + L-cysteinyl-[cysteine desulfurase] + A + AMP + diphosphate + H(+). Its pathway is tRNA modification. Functionally, catalyzes the ATP-dependent 2-thiolation of cytidine in position 32 of tRNA, to form 2-thiocytidine (s(2)C32). The sulfur atoms are provided by the cysteine/cysteine desulfurase (IscS) system. The polypeptide is tRNA-cytidine(32) 2-sulfurtransferase (Acinetobacter baumannii (strain SDF)).